Consider the following 166-residue polypeptide: Ribosome maturation factor RimM (166 aa).

One can recognise a PRC barrel domain in the interval D91 to L163.

Belongs to the RimM family. Binds ribosomal protein uS19.

Its subcellular location is the cytoplasm. In terms of biological role, an accessory protein needed during the final step in the assembly of 30S ribosomal subunit, possibly for assembly of the head region. Essential for efficient processing of 16S rRNA. May be needed both before and after RbfA during the maturation of 16S rRNA. It has affinity for free ribosomal 30S subunits but not for 70S ribosomes. The sequence is that of Ribosome maturation factor RimM from Corynebacterium diphtheriae (strain ATCC 700971 / NCTC 13129 / Biotype gravis).